A 380-amino-acid chain; its full sequence is Lipid-A-disaccharide synthase (380 aa).

The protein belongs to the LpxB family.

The enzyme catalyses a lipid X + a UDP-2-N,3-O-bis[(3R)-3-hydroxyacyl]-alpha-D-glucosamine = a lipid A disaccharide + UDP + H(+). It participates in bacterial outer membrane biogenesis; LPS lipid A biosynthesis. Condensation of UDP-2,3-diacylglucosamine and 2,3-diacylglucosamine-1-phosphate to form lipid A disaccharide, a precursor of lipid A, a phosphorylated glycolipid that anchors the lipopolysaccharide to the outer membrane of the cell. The chain is Lipid-A-disaccharide synthase from Rickettsia typhi (strain ATCC VR-144 / Wilmington).